The primary structure comprises 594 residues: Chitooligosaccharidolytic beta-N-acetylglucosaminidase (594 aa).

The first 22 residues, 1 to 22, serve as a signal peptide directing secretion; sequence MWSRRIPLFIFGVLVLILSVAA. 2 disulfides stabilise this stretch: Cys31/Cys59 and Cys36/Cys55. An N-linked (GlcNAc...) asparagine glycan is attached at Asn164. Active-site charge relay system residues include Asp249 and His303. 2 disulfide bridges follow: Cys316–Cys373 and Cys326–Cys331. Glu368 serves as the catalytic Charge relay system. A glycan (N-linked (GlcNAc...) asparagine) is linked at Asn375. Disulfide bonds link Cys478-Cys491 and Cys585-Cys592.

The protein belongs to the glycosyl hydrolase 20 family. As to quaternary structure, homodimer.

The enzyme catalyses Hydrolysis of terminal non-reducing N-acetyl-D-hexosamine residues in N-acetyl-beta-D-hexosaminides.. Inhibited by O-(2-acetamido-2-deoxy-D-glucopyransylidene)-amino-N-phenylcarbamate (PUGNAc). Inhibited by thiabendazole (TMG)-chitotriomycin. Inhibited by 6-(dimethylamino)-2-(2-(((5-methyl-1,3,4-thiadiazol-2-yl)methyl)amino)ethyl)- 1H-benzo[de]isoquinoline-1,3(2H)-dione (Q2), a synthesized non-carbohydrate unsymmetrical dyad of naphthalimide and thiadiazole having a dimethylamino group at C4 of the naphthalimide. Inhibited poorly by N-acetyl-glucosamine (NAG)-thiazoline (NGT), but when the thiazoline ring of NGT is replaced by a bulky substituent such as in compound 1,2-dideoxy-2'-methylamino-alpha-D-glucopyranoso-[2,1-d]-Delta2'-thiazoline (NMAGT), the inhibition constant Ki is lowered 600-fold compared to that of NGT. Inhibited by berberine, berberine analogs thalifendine and palmatine, and berberine derivative SYSU-1, but not by berberine analog tetrahydroberberine. In terms of biological role, hydrolyzes one beta-GlcNAc unit at a time from the non-reducing ends of substrates, with a preference for shorter substrates. The 2-acetamido group and the beta-glycoside bond linkage in the substrate are required for its activity. Active with p-nitrophenyl (pNP)-beta-GlcNAc, pNP-beta-GalNAc and chitooligosaccharides (degree of polymerization from 2 to 6), but not with the complex N-glycan substrate (GlcNAcbeta-1,2Manalpha-1,6)(GlcNAcbeta-1,2Manalpha-1,3)Manbeta-1,4GlcNAcbeta-1,4GlcNAc-PA (GnGn-PA), pNP-alpha-GlcNAc or with the long polymer colloidal chitin. Involved in chitin catabolism. Involved in the degradation of old cuticle during the pupation stage. The chain is Chitooligosaccharidolytic beta-N-acetylglucosaminidase from Ostrinia furnacalis (Asian corn borer).